The following is a 445-amino-acid chain: tRNA-2-methylthio-N(6)-dimethylallyladenosine synthase (445 aa).

The MTTase N-terminal domain occupies 4–121 (NKIYIKTWGC…LPNMIQEVKK (118 aa)). [4Fe-4S] cluster is bound by residues Cys-13, Cys-50, Cys-84, Cys-158, Cys-162, and Cys-165. The Radical SAM core domain occupies 144–376 (RKPKVTAFVS…QTLIRNNTTM (233 aa)). The TRAM domain maps to 379–442 (QKMLGSIQSV…PNSLRGSYEK (64 aa)).

The protein belongs to the methylthiotransferase family. MiaB subfamily. Monomer. Requires [4Fe-4S] cluster as cofactor.

It localises to the cytoplasm. It carries out the reaction N(6)-dimethylallyladenosine(37) in tRNA + (sulfur carrier)-SH + AH2 + 2 S-adenosyl-L-methionine = 2-methylsulfanyl-N(6)-dimethylallyladenosine(37) in tRNA + (sulfur carrier)-H + 5'-deoxyadenosine + L-methionine + A + S-adenosyl-L-homocysteine + 2 H(+). Functionally, catalyzes the methylthiolation of N6-(dimethylallyl)adenosine (i(6)A), leading to the formation of 2-methylthio-N6-(dimethylallyl)adenosine (ms(2)i(6)A) at position 37 in tRNAs that read codons beginning with uridine. The chain is tRNA-2-methylthio-N(6)-dimethylallyladenosine synthase from Buchnera aphidicola subsp. Baizongia pistaciae (strain Bp).